The sequence spans 229 residues: Large ribosomal subunit protein uL1 (229 aa).

It belongs to the universal ribosomal protein uL1 family. Part of the 50S ribosomal subunit.

Functionally, binds directly to 23S rRNA. The L1 stalk is quite mobile in the ribosome, and is involved in E site tRNA release. In terms of biological role, protein L1 is also a translational repressor protein, it controls the translation of the L11 operon by binding to its mRNA. This is Large ribosomal subunit protein uL1 from Flavobacterium johnsoniae (strain ATCC 17061 / DSM 2064 / JCM 8514 / BCRC 14874 / CCUG 350202 / NBRC 14942 / NCIMB 11054 / UW101) (Cytophaga johnsonae).